Here is a 267-residue protein sequence, read N- to C-terminus: Phosphatidylglycerol--prolipoprotein diacylglyceryl transferase (267 aa).

4 consecutive transmembrane segments (helical) span residues 20–40 (LEIRWYAICILLGLILGVYLA), 57–77 (FILIAFPLSILGARIYYVAFS), 88–108 (IFAIWNGGIAIYGGLITGAIV), and 117–137 (FINTLDFLDIVAPSVMIAQAI). Arginine 139 is a binding site for a 1,2-diacyl-sn-glycero-3-phospho-(1'-sn-glycerol). Helical transmembrane passes span 175–195 (QPTFLFESLWNLLGFGLVCVL), 205–225 (GEITAFYLVWYGCGRLLIEGL), and 235–255 (IRVSQWLSGVLILVGIIMVVL).

It belongs to the Lgt family.

The protein resides in the cell membrane. It carries out the reaction L-cysteinyl-[prolipoprotein] + a 1,2-diacyl-sn-glycero-3-phospho-(1'-sn-glycerol) = an S-1,2-diacyl-sn-glyceryl-L-cysteinyl-[prolipoprotein] + sn-glycerol 1-phosphate + H(+). It functions in the pathway protein modification; lipoprotein biosynthesis (diacylglyceryl transfer). In terms of biological role, catalyzes the transfer of the diacylglyceryl group from phosphatidylglycerol to the sulfhydryl group of the N-terminal cysteine of a prolipoprotein, the first step in the formation of mature lipoproteins. This is Phosphatidylglycerol--prolipoprotein diacylglyceryl transferase from Streptococcus suis (strain 98HAH33).